A 373-amino-acid chain; its full sequence is 4-hydroxy-3-methylbut-2-en-1-yl diphosphate synthase (flavodoxin) (373 aa).

[4Fe-4S] cluster contacts are provided by Cys269, Cys272, Cys304, and Glu311.

Belongs to the IspG family. It depends on [4Fe-4S] cluster as a cofactor.

It catalyses the reaction (2E)-4-hydroxy-3-methylbut-2-enyl diphosphate + oxidized [flavodoxin] + H2O + 2 H(+) = 2-C-methyl-D-erythritol 2,4-cyclic diphosphate + reduced [flavodoxin]. It participates in isoprenoid biosynthesis; isopentenyl diphosphate biosynthesis via DXP pathway; isopentenyl diphosphate from 1-deoxy-D-xylulose 5-phosphate: step 5/6. Its function is as follows. Converts 2C-methyl-D-erythritol 2,4-cyclodiphosphate (ME-2,4cPP) into 1-hydroxy-2-methyl-2-(E)-butenyl 4-diphosphate. This Baumannia cicadellinicola subsp. Homalodisca coagulata protein is 4-hydroxy-3-methylbut-2-en-1-yl diphosphate synthase (flavodoxin).